Reading from the N-terminus, the 294-residue chain is Shikimate kinase (294 aa).

87–97 (PLAGGLKSSSA) provides a ligand contact to ATP.

The protein belongs to the GHMP kinase family. Archaeal shikimate kinase subfamily.

It is found in the cytoplasm. It carries out the reaction shikimate + ATP = 3-phosphoshikimate + ADP + H(+). Its pathway is metabolic intermediate biosynthesis; chorismate biosynthesis; chorismate from D-erythrose 4-phosphate and phosphoenolpyruvate: step 5/7. The polypeptide is Shikimate kinase (aroK) (Methanosarcina acetivorans (strain ATCC 35395 / DSM 2834 / JCM 12185 / C2A)).